Here is a 512-residue protein sequence, read N- to C-terminus: Kelch repeat protein C2 (512 aa).

The BTB domain maps to 2–67; it reads ESVIFSINGE…MRWKKINITI (66 aa). The BACK domain maps to 102-176; sequence CIRMFNFSKR…LLKWIHKNPN (75 aa). Kelch repeat units follow at residues 216-261, 262-307, 309-354, 356-403, 405-449, and 452-498; these read IKHN…LHNC, LYII…VNNG, LYVI…FVND, IYVM…EYDG, IYVI…SCGD, and LIIA…THKS.

Belongs to the poxviruses Kelch family.

The protein is Kelch repeat protein C2 of Rabbitpox virus (strain Utrecht) (RPV).